We begin with the raw amino-acid sequence, 156 residues long: D-aminoacyl-tRNA deacylase (156 aa).

Residues 142–143 (GP) carry the Gly-cisPro motif, important for rejection of L-amino acids motif.

It belongs to the DTD family. In terms of assembly, homodimer.

Its subcellular location is the cytoplasm. It catalyses the reaction glycyl-tRNA(Ala) + H2O = tRNA(Ala) + glycine + H(+). The enzyme catalyses a D-aminoacyl-tRNA + H2O = a tRNA + a D-alpha-amino acid + H(+). An aminoacyl-tRNA editing enzyme that deacylates mischarged D-aminoacyl-tRNAs. Also deacylates mischarged glycyl-tRNA(Ala), protecting cells against glycine mischarging by AlaRS. Acts via tRNA-based rather than protein-based catalysis; rejects L-amino acids rather than detecting D-amino acids in the active site. By recycling D-aminoacyl-tRNA to D-amino acids and free tRNA molecules, this enzyme counteracts the toxicity associated with the formation of D-aminoacyl-tRNA entities in vivo and helps enforce protein L-homochirality. In Delftia acidovorans (strain DSM 14801 / SPH-1), this protein is D-aminoacyl-tRNA deacylase.